The sequence spans 474 residues: Sensor protein CreC (474 aa).

The Periplasmic segment spans residues 1–6 (MRIGMR). A helical transmembrane segment spans residues 7-27 (LLLGYFLLVAVAAWFVLAIFV). The Cytoplasmic portion of the chain corresponds to 28–146 (KEVKPGVRRA…LQNPADPESS (119 aa)). The chain crosses the membrane as a helical span at residues 147–167 (VMYVAAPIMDGSRLIGVLSVG). Residues 168-183 (KPNAAMAPVIKRSERR) lie on the Periplasmic side of the membrane. Residues 184 to 204 (ILWASAILLGIALVIGAGMVW) traverse the membrane as a helical segment. One can recognise an HAMP domain in the interval 205–255 (WINRSIARLTRYADSVTDNKPVPLPDLGSSELRKLAQALESMRVKLEGKNY). Residues 205–474 (WINRSIARLT…ASLRLHRHFT (270 aa)) are Cytoplasmic-facing. In terms of domain architecture, Histidine kinase spans 262 to 473 (ALTHELKSPL…LASLRLHRHF (212 aa)). Histidine 265 carries the post-translational modification Phosphohistidine; by autocatalysis.

Autophosphorylated.

The protein localises to the cell inner membrane. It carries out the reaction ATP + protein L-histidine = ADP + protein N-phospho-L-histidine.. In terms of biological role, member of the two-component regulatory system CreC/CreB involved in catabolic regulation. CreC may function as a membrane-associated protein kinase that phosphorylates CreB in response to environmental signals. CreC can also phosphorylate PhoB. This Escherichia coli (strain K12) protein is Sensor protein CreC (creC).